Consider the following 192-residue polypeptide: Ribosome maturation factor RimP (192 aa).

This sequence belongs to the RimP family.

It localises to the cytoplasm. Required for maturation of 30S ribosomal subunits. The protein is Ribosome maturation factor RimP of Mycobacterium sp. (strain JLS).